We begin with the raw amino-acid sequence, 99 residues long: Small ribosomal subunit protein uS19 (99 aa).

This sequence belongs to the universal ribosomal protein uS19 family.

In terms of biological role, protein S19 forms a complex with S13 that binds strongly to the 16S ribosomal RNA. This Sulfurihydrogenibium sp. (strain YO3AOP1) protein is Small ribosomal subunit protein uS19.